A 796-amino-acid polypeptide reads, in one-letter code: Choline transporter-like 2 (796 aa).

The N-linked (GlcNAc...) asparagine glycan is linked to Asn20. The chain crosses the membrane as a helical span at residues 35–55 (PCLLLFVLFLGGWAFIAQYAI). Residues Asn209 and Asn284 are each glycosylated (N-linked (GlcNAc...) asparagine). 4 helical membrane-spanning segments follow: residues 304–324 (WSIV…YIAL), 332–352 (ILWF…YFSV), 386–406 (LYLS…VIVL), and 431–451 (VFFP…AIGV). N-linked (GlcNAc...) asparagine glycosylation is found at Asn488 and Asn520. The next 5 membrane-spanning stretches (helical) occupy residues 542–562 (VFGF…VLAS), 585–605 (FFQT…ILAI), 626–648 (AVTR…FLKF), 691–711 (FLFF…TYYF), and 724–744 (IAVP…VFFG).

Belongs to the CTL (choline transporter-like) family.

The protein resides in the membrane. This is Choline transporter-like 2 from Drosophila melanogaster (Fruit fly).